Consider the following 805-residue polypeptide: MSSSSWLLLSLVAVTAAQSTIEEQAKTFLDKFNHEAEDLFYQSSLASWNYNTNITEENVQNMNNAGDKWSAFLKEQSTLAQMYPLQEIQNLTVKLQLQALQQNGSSVLSEDKSKRLNTILNTMSTIYSTGKVCNPDNPQECLLLEPGLNEIMANSLDYNERLWAWESWRSEVGKQLRPLYEEYVVLKNEMARANHYEDYGDYWRGDYEVNGVDGYDYSRGQLIEDVEHTFEEIKPLYEHLHAYVRAKLMNAYPSYISPIGCLPAHLLGDMWGRFWTNLYSLTVPFGQKPNIDVTDAMVDQAWDAQRIFKEAEKFFVSVGLPNMTQGFWENSMLTDPGNVQKAVCHPTAWDLGKGDFRILMCTKVTMDDFLTAHHEMGHIQYDMAYAAQPFLLRNGANEGFHEAVGEIMSLSAATPKHLKSIGLLSPDFQEDNETEINFLLKQALTIVGTLPFTYMLEKWRWMVFKGEIPKDQWMKKWWEMKREIVGVVEPVPHDETYCDPASLFHVSNDYSFIRYYTRTLYQFQFQEALCQAAKHEGPLHKCDISNSTEAGQKLFNMLRLGKSEPWTLALENVVGAKNMNVRPLLNYFEPLFTWLKDQNKNSFVGWSTDWSPYADQSIKVRISLKSALGDKAYEWNDNEMYLFRSSVAYAMRQYFLKVKNQMILFGEEDVRVANLKPRISFNFFVTAPKNVSDIIPRTEVEKAIRMSRSRINDAFRLNDNSLEFLGIQPTLGPPNQPPVSIWLIVFGVVMGVIVVGIVILIFTGIRDRKKKNKARSGENPYASIDISKGENNPGFQNTDDVQTSF.

A signal peptide spans 1-17; sequence MSSSSWLLLSLVAVTAA. The Extracellular portion of the chain corresponds to 18 to 740; that stretch reads QSTIEEQAKT…LGPPNQPPVS (723 aa). The Peptidase M2 domain occupies 19-607; it reads STIEEQAKTF…QNKNSFVGWS (589 aa). Residues 30 to 41 are interaction with SARS-CoV spike glycoprotein; the sequence is DKFNHEAEDLFY. An N-linked (GlcNAc...) asparagine glycan is attached at Asn-53. The interaction with SARS-CoV spike glycoprotein stretch occupies residues 82–84; sequence MYP. N-linked (GlcNAc...) asparagine glycosylation is found at Asn-90 and Asn-103. A disulfide bridge connects residues Cys-133 and Cys-141. Residue Arg-169 participates in chloride binding. Arg-273 contacts substrate. N-linked (GlcNAc...) asparagine glycosylation is present at Asn-322. A disulfide bridge links Cys-344 with Cys-361. Position 345–346 (345–346) interacts with substrate; it reads HP. The interval 353-357 is interaction with SARS-CoV spike glycoprotein; that stretch reads KGDFR. His-374 serves as a coordination point for Zn(2+). The active-site Proton acceptor is Glu-375. Zn(2+) contacts are provided by His-378 and Glu-402. Asn-432 is a glycosylation site (N-linked (GlcNAc...) asparagine). Chloride-binding residues include Trp-477 and Lys-481. His-505 serves as the catalytic Proton donor. Residue Tyr-515 coordinates substrate. Cys-530 and Cys-542 are disulfide-bonded. The N-linked (GlcNAc...) asparagine glycan is linked to Asn-546. Residues 614–805 form the Collectrin-like domain; sequence ADQSIKVRIS…QNTDDVQTSF (192 aa). Positions 652–659 are essential for cleavage by ADAM17; the sequence is RQYFLKVK. An N-linked (GlcNAc...) asparagine glycan is attached at Asn-690. The essential for cleavage by TMPRSS11D and TMPRSS2 stretch occupies residues 697–716; sequence RTEVEKAIRMSRSRINDAFR. Residues 741 to 761 traverse the membrane as a helical segment; it reads IWLIVFGVVMGVIVVGIVILI. Over 762 to 805 the chain is Cytoplasmic; that stretch reads FTGIRDRKKKNKARSGENPYASIDISKGENNPGFQNTDDVQTSF. The interval 772 to 805 is disordered; the sequence is NKARSGENPYASIDISKGENNPGFQNTDDVQTSF. The short motif at 778–786 is the LIR element; that stretch reads ENPYASIDI. Phosphotyrosine is present on Tyr-781. The Endocytic sorting signal signature appears at 781–784; that stretch reads YASI. The SH2-binding signature appears at 781-785; the sequence is YASID. A Phosphoserine modification is found at Ser-783. Residue Lys-788 forms a Glycyl lysine isopeptide (Lys-Gly) (interchain with G-Cter in ubiquitin) linkage. The segment covering 789–805 has biased composition (polar residues); the sequence is GENNPGFQNTDDVQTSF. The PTB motif lies at 792–795; it reads NPGF. Positions 803 to 805 match the PDZ-binding motif; that stretch reads TSF.

It belongs to the peptidase M2 family. Homodimer. Interacts with the catalytically active form of TMPRSS2. Interacts with SLC6A19; this interaction is essential for expression and function of SLC6A19 in intestine. Interacts with ITGA5:ITGB1. Probably interacts (via endocytic sorting signal motif) with AP2M1; the interaction is inhibited by phosphorylation of Tyr-781. Interacts (via PDZ-binding motif) with NHERF1 (via PDZ domains); the interaction may enhance ACE2 membrane residence. As to quaternary structure, (Microbial infection) Interacts with SARS coronavirus/SARS-CoV spike protein. In terms of assembly, (Microbial infection) Interacts with SARS coronavirus-2/SARS-CoV-2 spike protein (via RBD domain). (Microbial infection) Interacts with human coronavirus NL63 spike protein. As to quaternary structure, (Microbial infection) Interacts with human coronavirus NL63/HCoV-NL63 spike glycoprotein. In terms of assembly, (Microbial infection) Interacts with SARS coronavirus-2/SARS-CoV-2 spike protein; the interaction is increased by AVP/Arg-vasopressin with which they may form a complex. It depends on Zn(2+) as a cofactor. Chloride is required as a cofactor. In terms of processing, N-glycosylation on Asn-90 may limit SARS infectivity. Post-translationally, proteolytic cleavage by ADAM17 generates a secreted form. Also cleaved by serine proteases: TMPRSS2, TMPRSS11D and HPN/TMPRSS1. Phosphorylated. Phosphorylation at Tyr-781 probably inhibits interaction with AP2M1 and enables interactions with proteins containing SH2 domains. In terms of processing, ubiquitinated. Ubiquitinated on Lys-788 via 'Lys-48'-linked ubiquitin. 'Lys-48'-linked deubiquitinated by USP50 on the Lys-788; leading to its stabilization. In terms of tissue distribution, expressed in endothelial cells from small and large arteries, and in arterial smooth muscle cells (at protein level). Expressed in enterocytes of the small intestine, Leydig cells and Sertoli cells (at protein level). Expressed in the renal proximal tubule and the small intestine (at protein level). Expressed in heart, kidney, testis, and gastrointestinal system (at protein level). In lung, expressed at low levels in some alveolar type 2 cells, the expression seems to be individual-specific (at protein level). Expressed in nasal epithelial cells (at protein level). Coexpressed with TMPRSS2 within some lung alveolar type 2 cells, ileal absorptive enterocytes, intestinal epithelial cells, cornea, gallbladder and nasal goblet secretory cells. Coexpressed with TMPRSS4 within mature enterocytes. Expressed in nasal and bronchial epithelial cells (at protein level).

It is found in the secreted. The protein localises to the cell membrane. The protein resides in the cytoplasm. Its subcellular location is the cell projection. It localises to the cilium. It is found in the apical cell membrane. The catalysed reaction is angiotensin II + H2O = angiotensin-(1-7) + L-phenylalanine. It catalyses the reaction angiotensin I + H2O = angiotensin-(1-9) + L-leucine. It carries out the reaction bradykinin(1-8) + H2O = bradykinin(1-7) + L-phenylalanine. The enzyme catalyses neurotensin + H2O = neurotensin-(1-12) + L-leucine. The catalysed reaction is neurotensin-(1-8) + H2O = neurotensin-(1-7) + L-arginine. It catalyses the reaction kinetensin + H2O = kinetensin-(1-8) + L-leucine. It carries out the reaction dynorphin A-(1-13) + H2O = dynorphin A-(1-12) + L-lysine. The enzyme catalyses apelin-13 + H2O = apelin-12 + L-phenylalanine. The catalysed reaction is [Pyr1]apelin-13 + H2O = [Pyr1]apelin-12 + L-phenylalanine. It catalyses the reaction apelin-17 + H2O = apelin-16 + L-phenylalanine. It carries out the reaction beta-casomorphin-7 + H2O = beta-casomorphin-6 + L-isoleucine. The enzyme catalyses neocasomorphin + H2O = neocasomorphin-(1-5) + L-isoleucine. With respect to regulation, regulated by chloride and fluoride, but not bromide. Chloride increases angiotensin I and decreases angiotensin II cleavage. Inhibited by MLN-4760, cFP_Leu, and EDTA, but not by the ACE inhibitors lisinopril, captopril and enalaprilat. Highly potent and selective in vitro ACE2 inhibitors were identified. Functionally, essential counter-regulatory carboxypeptidase of the renin-angiotensin hormone system that is a critical regulator of blood volume, systemic vascular resistance, and thus cardiovascular homeostasis. Converts angiotensin I to angiotensin 1-9, a nine-amino acid peptide with anti-hypertrophic effects in cardiomyocytes, and angiotensin II to angiotensin 1-7, which then acts as a beneficial vasodilator and anti-proliferation agent, counterbalancing the actions of the vasoconstrictor angiotensin II. Also removes the C-terminal residue from three other vasoactive peptides, neurotensin, kinetensin, and des-Arg bradykinin, but is not active on bradykinin. Also cleaves other biological peptides, such as apelins (apelin-13, [Pyr1]apelin-13, apelin-17, apelin-36), casomorphins (beta-casomorphin-7, neocasomorphin) and dynorphin A with high efficiency. In addition, ACE2 C-terminus is homologous to collectrin and is responsible for the trafficking of the neutral amino acid transporter SL6A19 to the plasma membrane of gut epithelial cells via direct interaction, regulating its expression on the cell surface and its catalytic activity. In terms of biological role, (Microbial infection) Acts as a receptor for human coronaviruses SARS-CoV and SARS-CoV-2, as well as human coronavirus NL63/HCoV-NL63. Its function is as follows. Non-functional as a carboxypeptidase. (Microbial infection) Non-functional as a receptor for human coronavirus SARS-CoV-2. The chain is Angiotensin-converting enzyme 2 from Homo sapiens (Human).